Reading from the N-terminus, the 550-residue chain is Arginine--tRNA ligase (550 aa).

The 'HIGH' region signature appears at 130–140 (ANPTGPIHLGG).

It belongs to the class-I aminoacyl-tRNA synthetase family. As to quaternary structure, monomer.

It is found in the cytoplasm. The catalysed reaction is tRNA(Arg) + L-arginine + ATP = L-arginyl-tRNA(Arg) + AMP + diphosphate. This Corynebacterium efficiens (strain DSM 44549 / YS-314 / AJ 12310 / JCM 11189 / NBRC 100395) protein is Arginine--tRNA ligase.